A 392-amino-acid chain; its full sequence is Protein-glutamate methylesterase/protein-glutamine glutaminase (392 aa).

A Response regulatory domain is found at 9-126 (TVLIVDDSPF…GADIQALARD (118 aa)). Position 60 is a 4-aspartylphosphate (Asp60). The tract at residues 148-194 (VSRISSASGSRPPWTAGAASENTNRLSSPGSTSSTLGSAKGRSLDSG) is disordered. Residues 173-185 (LSSPGSTSSTLGS) are compositionally biased toward low complexity. The 195-residue stretch at 198 to 392 (PKYPVEIVAI…RHIVECVQRR (195 aa)) folds into the CheB-type methylesterase domain. Catalysis depends on residues Ser210, His237, and Asp334.

This sequence belongs to the CheB family. In terms of processing, phosphorylated by CheA. Phosphorylation of the N-terminal regulatory domain activates the methylesterase activity.

The protein localises to the cytoplasm. The enzyme catalyses [protein]-L-glutamate 5-O-methyl ester + H2O = L-glutamyl-[protein] + methanol + H(+). The catalysed reaction is L-glutaminyl-[protein] + H2O = L-glutamyl-[protein] + NH4(+). Functionally, involved in chemotaxis. Part of a chemotaxis signal transduction system that modulates chemotaxis in response to various stimuli. Catalyzes the demethylation of specific methylglutamate residues introduced into the chemoreceptors (methyl-accepting chemotaxis proteins or MCP) by CheR. Also mediates the irreversible deamidation of specific glutamine residues to glutamic acid. This Desulfitobacterium hafniense (strain Y51) protein is Protein-glutamate methylesterase/protein-glutamine glutaminase.